The chain runs to 146 residues: D-aminoacyl-tRNA deacylase (146 aa).

Positions 137 to 138 (GP) match the Gly-cisPro motif, important for rejection of L-amino acids motif.

It belongs to the DTD family. In terms of assembly, homodimer.

It is found in the cytoplasm. The catalysed reaction is glycyl-tRNA(Ala) + H2O = tRNA(Ala) + glycine + H(+). It carries out the reaction a D-aminoacyl-tRNA + H2O = a tRNA + a D-alpha-amino acid + H(+). An aminoacyl-tRNA editing enzyme that deacylates mischarged D-aminoacyl-tRNAs. Also deacylates mischarged glycyl-tRNA(Ala), protecting cells against glycine mischarging by AlaRS. Acts via tRNA-based rather than protein-based catalysis; rejects L-amino acids rather than detecting D-amino acids in the active site. By recycling D-aminoacyl-tRNA to D-amino acids and free tRNA molecules, this enzyme counteracts the toxicity associated with the formation of D-aminoacyl-tRNA entities in vivo and helps enforce protein L-homochirality. This Cellvibrio japonicus (strain Ueda107) (Pseudomonas fluorescens subsp. cellulosa) protein is D-aminoacyl-tRNA deacylase.